Reading from the N-terminus, the 229-residue chain is Cytosolic-abundant heat soluble protein 107838 (229 aa).

A disordered region spans residues 1-29 (MSAEAMNMNMNQDAVFIPPPEGEQYERKE). The stretch at 109 to 145 (LSANYQKEVERKTEAYRKQQEVEADKIRKELEKQHLR) forms a coiled coil. CAHS motif stretches follow at residues 124-142 (YRKQ…LEKQ) and 161-179 (QKKM…MDRE). Polar residues predominate over residues 202 to 218 (SSAAGTETGGQVVSESQ). Positions 202–229 (SSAAGTETGGQVVSESQKFTERNRQIKQ) are disordered. A compositionally biased stretch (basic and acidic residues) spans 219-229 (KFTERNRQIKQ).

It belongs to the Cytosolic-abundant heat soluble protein (CAHS) family.

The protein resides in the cytoplasm. CAHS proteins are cytosolic heat soluble proteins that seem to contribute to the anhydrobiosis in tardigrades, but their specific mechanisms are yet to be identified. It is possible that protection during anhydrobiosis might occur via the stabilization of vitrifying small molecules such as sugars, but not via the direct glass transition of CAHS proteins themselves. This is Cytosolic-abundant heat soluble protein 107838 from Paramacrobiotus richtersi (Water bear).